Reading from the N-terminus, the 227-residue chain is Probable septum site-determining protein MinC (227 aa).

This sequence belongs to the MinC family. Interacts with MinD and FtsZ.

In terms of biological role, cell division inhibitor that blocks the formation of polar Z ring septums. Rapidly oscillates between the poles of the cell to destabilize FtsZ filaments that have formed before they mature into polar Z rings. Prevents FtsZ polymerization. This Geobacillus kaustophilus (strain HTA426) protein is Probable septum site-determining protein MinC.